Reading from the N-terminus, the 390-residue chain is MKVLFFDCFAGIAGDMTVAAMVELGLPLEHLRRELARLGLPASTYELAVEPVRRKGVAASHFEVRVEQDQPHRHYADIAAMIDGSSLAATVKDKAQRIFRRIAEAEAKVHGMEIGHVHFHEVGAVDSIIDIVGAAIGLDYLGIEAVYVSPLPLGSGYIETAHGRLPVPAPATAELLKGLPVHGNIGSGERVTPTGAAIVAALGTAFGSHPPMEIRSIGYGAGSKDFADMPNLLRLVLGETAETLQRDEIVVLETNIDDMNPELLGFLMERLFEKGALDVTFSPLQMKKNRPGTLVTVITPCAKRDELARLILSESTAIGVRYYPAQRLILSRTVEERLTSLGPVKVKVVTDDALLRRVVPEFEECRRLTAEKGLPLMDVYRIVEREVAGT.

This sequence belongs to the LarC family.

The protein is Putative nickel insertion protein of Geotalea daltonii (strain DSM 22248 / JCM 15807 / FRC-32) (Geobacter daltonii).